Reading from the N-terminus, the 500-residue chain is Glycerol kinase (500 aa).

Thr13 is a binding site for ADP. ATP contacts are provided by Thr13, Thr14, and Ser15. Sn-glycerol 3-phosphate is bound at residue Thr13. Arg17 provides a ligand contact to ADP. Residues Arg83, Glu84, Tyr135, and Asp244 each contribute to the sn-glycerol 3-phosphate site. The glycerol site is built by Arg83, Glu84, Tyr135, Asp244, and Gln245. Positions 266 and 309 each coordinate ADP. Residues Thr266, Gly309, Gln313, and Gly410 each contribute to the ATP site. ADP is bound by residues Gly410 and Asn414.

The protein belongs to the FGGY kinase family.

The catalysed reaction is glycerol + ATP = sn-glycerol 3-phosphate + ADP + H(+). It participates in polyol metabolism; glycerol degradation via glycerol kinase pathway; sn-glycerol 3-phosphate from glycerol: step 1/1. Inhibited by fructose 1,6-bisphosphate (FBP). Its function is as follows. Key enzyme in the regulation of glycerol uptake and metabolism. Catalyzes the phosphorylation of glycerol to yield sn-glycerol 3-phosphate. The polypeptide is Glycerol kinase (Burkholderia pseudomallei (strain K96243)).